The primary structure comprises 481 residues: Cysteine--tRNA ligase (481 aa).

Zn(2+) is bound at residue Cys-29. The 'HIGH' region signature appears at 31–41; that stretch reads PTVYDYSHLGH. 3 residues coordinate Zn(2+): Cys-210, His-235, and Glu-239. The 'KMSKS' region motif lies at 272 to 276; the sequence is KMSKS. Residue Lys-275 participates in ATP binding.

This sequence belongs to the class-I aminoacyl-tRNA synthetase family. In terms of assembly, monomer. Zn(2+) serves as cofactor.

The protein resides in the cytoplasm. The enzyme catalyses tRNA(Cys) + L-cysteine + ATP = L-cysteinyl-tRNA(Cys) + AMP + diphosphate. The sequence is that of Cysteine--tRNA ligase from Anaeromyxobacter sp. (strain K).